The following is a 163-amino-acid chain: Choriogonadotropin subunit beta (163 aa).

A signal peptide spans 1 to 20; that stretch reads MEMLQGLLLCLLLSTGGAWA. 6 disulfide bridges follow: Cys29/Cys76, Cys43/Cys91, Cys46/Cys129, Cys54/Cys107, Cys58/Cys109, and Cys112/Cys119. An N-linked (GlcNAc...) asparagine glycan is attached at Asn50. The N-linked (GlcNAc...) asparagine glycan is linked to Asn124. Over residues 135–151 the composition is skewed to polar residues; sequence QDSSSNVPPSNLTSPSQ. The interval 135 to 163 is disordered; it reads QDSSSNVPPSNLTSPSQLLEPAVTPLVPQ. Ser139 carries an O-linked (GalNAc...) serine glycan. Residue Asn145 is glycosylated (N-linked (GlcNAc...) asparagine). Residue Ser150 is glycosylated (O-linked (GalNAc...) serine).

Belongs to the glycoprotein hormones subunit beta family. Heterodimer of a common alpha chain and a unique beta chain which confers biological specificity to thyrotropin, lutropin, follitropin and gonadotropin.

The protein localises to the secreted. Stimulates the ovaries to synthesize the steroids that are essential for the maintenance of pregnancy. The sequence is that of Choriogonadotropin subunit beta (CGB) from Saimiri boliviensis boliviensis (Bolivian squirrel monkey).